The following is a 311-amino-acid chain: Class E basic helix-loop-helix protein 22 (311 aa).

A disordered region spans residues 22–170; it reads AKRMESAFRS…GGSKKSKEQK (149 aa). The span at 81-96 shows a compositional bias: low complexity; sequence GESASRSSVAESSGGE. The span at 125–147 shows a compositional bias: gly residues; it reads AGGGGGGGGGGGGGPGGGGGGGL. Residues 171-225 enclose the bHLH domain; that stretch reads ALRLNINARERRRMHDLNDALDELRAVIPYAHSPSVRKLSKIATLLLAKNYILMQ.

Its subcellular location is the nucleus. May act as a transcriptional repressor. The polypeptide is Class E basic helix-loop-helix protein 22 (BHLHE22) (Gallus gallus (Chicken)).